The chain runs to 505 residues: Activin receptor type-1B (505 aa).

The first 23 residues, methionine 1–glycine 23, serve as a signal peptide directing secretion. The Extracellular segment spans residues serine 24–glutamate 126. Asparagine 43 carries N-linked (GlcNAc...) asparagine glycosylation. A helical membrane pass occupies residues leucine 127–isoleucine 149. At asparagine 150–isoleucine 505 the chain is on the cytoplasmic side. Residues lysine 177–threonine 206 enclose the GS domain. The 291-residue stretch at isoleucine 207 to leucine 497 folds into the Protein kinase domain. Residues isoleucine 213 to valine 221 and lysine 234 each bind ATP. Catalysis depends on aspartate 335, which acts as the Proton acceptor. The residue at position 380 (tyrosine 380) is a Phosphotyrosine.

Belongs to the protein kinase superfamily. TKL Ser/Thr protein kinase family. TGFB receptor subfamily. Forms an activin receptor complex with activin receptor type-2 (ACVR2A or ACVR2B). Part of a complex consisting of MAGI2/ARIP1, ACVR2A, ACVR1B and SMAD3. Interacts with SMAD2 and SMAD3. Interacts with SMAD7. Interacts with FKBP1A. Interacts with IGSF1. Interacts with CRIPTO. Interacts with TDP2. Interacts with TSC22D1/TSC-22. Mg(2+) is required as a cofactor. It depends on Mn(2+) as a cofactor. In terms of processing, autophosphorylated. Phosphorylated by activin receptor type-2 (ACVR2A or ACVR2B) in response to activin-binding at serine and threonine residues in the GS domain. Phosphorylation of ACVR1B by activin receptor type-2 regulates association with SMAD7. Ubiquitinated. Level of ubiquitination is regulated by the SMAD7-SMURF1 complex. Post-translationally, ubiquitinated. Expressed in many tissues, most strongly in kidney, pancreas, brain, lung, and liver.

The protein localises to the cell membrane. It catalyses the reaction L-threonyl-[receptor-protein] + ATP = O-phospho-L-threonyl-[receptor-protein] + ADP + H(+). It carries out the reaction L-seryl-[receptor-protein] + ATP = O-phospho-L-seryl-[receptor-protein] + ADP + H(+). With respect to regulation, activin receptor type-2 (ACVR2A or ACVR2B) activates the type-1 receptor through phosphorylation of its regulatory GS domain. Its function is as follows. Transmembrane serine/threonine kinase activin type-1 receptor forming an activin receptor complex with activin receptor type-2 (ACVR2A or ACVR2B). Transduces the activin signal from the cell surface to the cytoplasm and is thus regulating a many physiological and pathological processes including neuronal differentiation and neuronal survival, hair follicle development and cycling, FSH production by the pituitary gland, wound healing, extracellular matrix production, immunosuppression and carcinogenesis. Activin is also thought to have a paracrine or autocrine role in follicular development in the ovary. Within the receptor complex, type-2 receptors (ACVR2A and/or ACVR2B) act as a primary activin receptors whereas the type-1 receptors like ACVR1B act as downstream transducers of activin signals. Activin binds to type-2 receptor at the plasma membrane and activates its serine-threonine kinase. The activated receptor type-2 then phosphorylates and activates the type-1 receptor such as ACVR1B. Once activated, the type-1 receptor binds and phosphorylates the SMAD proteins SMAD2 and SMAD3, on serine residues of the C-terminal tail. Soon after their association with the activin receptor and subsequent phosphorylation, SMAD2 and SMAD3 are released into the cytoplasm where they interact with the common partner SMAD4. This SMAD complex translocates into the nucleus where it mediates activin-induced transcription. Inhibitory SMAD7, which is recruited to ACVR1B through FKBP1A, can prevent the association of SMAD2 and SMAD3 with the activin receptor complex, thereby blocking the activin signal. Activin signal transduction is also antagonized by the binding to the receptor of inhibin-B via the IGSF1 inhibin coreceptor. ACVR1B also phosphorylates TDP2. In Homo sapiens (Human), this protein is Activin receptor type-1B (ACVR1B).